The primary structure comprises 366 residues: tRNA/tmRNA (uracil-C(5))-methyltransferase (366 aa).

S-adenosyl-L-methionine contacts are provided by Gln190, Tyr218, Asn223, Glu239, and Asp299. Cys324 acts as the Nucleophile in catalysis. Catalysis depends on Glu358, which acts as the Proton acceptor.

It belongs to the class I-like SAM-binding methyltransferase superfamily. RNA M5U methyltransferase family. TrmA subfamily.

The catalysed reaction is uridine(54) in tRNA + S-adenosyl-L-methionine = 5-methyluridine(54) in tRNA + S-adenosyl-L-homocysteine + H(+). It carries out the reaction uridine(341) in tmRNA + S-adenosyl-L-methionine = 5-methyluridine(341) in tmRNA + S-adenosyl-L-homocysteine + H(+). Its function is as follows. Dual-specificity methyltransferase that catalyzes the formation of 5-methyluridine at position 54 (m5U54) in all tRNAs, and that of position 341 (m5U341) in tmRNA (transfer-mRNA). This is tRNA/tmRNA (uracil-C(5))-methyltransferase from Salmonella typhi.